The chain runs to 508 residues: Photosystem II CP47 reaction center protein (508 aa).

A run of 6 helical transmembrane segments spans residues serine 21 to serine 36, isoleucine 101 to tryptophan 115, glycine 140 to phenylalanine 156, isoleucine 203 to serine 218, valine 237 to valine 252, and serine 457 to arginine 472.

Belongs to the PsbB/PsbC family. PsbB subfamily. As to quaternary structure, PSII is composed of 1 copy each of membrane proteins PsbA, PsbB, PsbC, PsbD, PsbE, PsbF, PsbH, PsbI, PsbJ, PsbK, PsbL, PsbM, PsbT, PsbX, PsbY, PsbZ, Psb30/Ycf12, at least 3 peripheral proteins of the oxygen-evolving complex and a large number of cofactors. It forms dimeric complexes. Requires Binds multiple chlorophylls. PSII binds additional chlorophylls, carotenoids and specific lipids. as cofactor.

It is found in the plastid. The protein resides in the chloroplast thylakoid membrane. In terms of biological role, one of the components of the core complex of photosystem II (PSII). It binds chlorophyll and helps catalyze the primary light-induced photochemical processes of PSII. PSII is a light-driven water:plastoquinone oxidoreductase, using light energy to abstract electrons from H(2)O, generating O(2) and a proton gradient subsequently used for ATP formation. This is Photosystem II CP47 reaction center protein from Barbarea verna (Land cress).